Reading from the N-terminus, the 366-residue chain is tRNA/tmRNA (uracil-C(5))-methyltransferase (366 aa).

S-adenosyl-L-methionine is bound by residues glutamine 190, tyrosine 218, asparagine 223, glutamate 239, and aspartate 299. Cysteine 324 acts as the Nucleophile in catalysis. Catalysis depends on glutamate 358, which acts as the Proton acceptor.

It belongs to the class I-like SAM-binding methyltransferase superfamily. RNA M5U methyltransferase family. TrmA subfamily.

The catalysed reaction is uridine(54) in tRNA + S-adenosyl-L-methionine = 5-methyluridine(54) in tRNA + S-adenosyl-L-homocysteine + H(+). The enzyme catalyses uridine(341) in tmRNA + S-adenosyl-L-methionine = 5-methyluridine(341) in tmRNA + S-adenosyl-L-homocysteine + H(+). Functionally, dual-specificity methyltransferase that catalyzes the formation of 5-methyluridine at position 54 (m5U54) in all tRNAs, and that of position 341 (m5U341) in tmRNA (transfer-mRNA). The sequence is that of tRNA/tmRNA (uracil-C(5))-methyltransferase from Escherichia coli O157:H7.